The following is a 128-amino-acid chain: Histone H2A type 1-H (128 aa).

A disordered region spans residues 1–22 (MSGRGKQGGKARAKAKTRSSRA). Ser2 bears the N-acetylserine mark. Ser2 carries the post-translational modification Phosphoserine; by RPS6KA5. Arg4 is subject to Citrulline; alternate. Arg4 bears the Symmetric dimethylarginine; by PRMT5; alternate mark. Lys6 bears the N6-(2-hydroxyisobutyryl)lysine mark. Positions 7–19 (QGGKARAKAKTRS) are enriched in basic residues. The residue at position 10 (Lys10) is an N6-(2-hydroxyisobutyryl)lysine; alternate. An N6-(beta-hydroxybutyryl)lysine; alternate mark is found at Lys10 and Lys14. At Lys10 the chain carries N6-lactoyllysine; alternate. An N6-succinyllysine; alternate modification is found at Lys10. Residue Lys14 forms a Glycyl lysine isopeptide (Lys-Gly) (interchain with G-Cter in ubiquitin); alternate linkage. Residue Lys16 forms a Glycyl lysine isopeptide (Lys-Gly) (interchain with G-Cter in ubiquitin) linkage. Lys37 is modified (N6-(2-hydroxyisobutyryl)lysine; alternate). Lys37 carries the N6-(beta-hydroxybutyryl)lysine; alternate modification. Lys37 bears the N6-crotonyllysine; alternate mark. An N6-(2-hydroxyisobutyryl)lysine mark is found at Lys75 and Lys76. At Lys96 the chain carries N6-(2-hydroxyisobutyryl)lysine; alternate. At Lys96 the chain carries N6-(beta-hydroxybutyryl)lysine; alternate. Lys96 is subject to N6-succinyllysine; alternate. N6-glutaryllysine; alternate is present on Lys96. Lys100 is subject to N6-glutaryllysine. Gln105 carries the post-translational modification N5-methylglutamine. Residue Lys119 is modified to N6-(2-hydroxyisobutyryl)lysine; alternate. At Lys119 the chain carries N6-(beta-hydroxybutyryl)lysine; alternate. Lys119 and Lys120 each carry N6-crotonyllysine; alternate. An N6-glutaryllysine; alternate mark is found at Lys119 and Lys120. Lys120 is covalently cross-linked (Glycyl lysine isopeptide (Lys-Gly) (interchain with G-Cter in ubiquitin); alternate). Thr121 bears the Phosphothreonine; by DCAF1 mark. Position 126 is an N6-crotonyllysine; alternate (Lys126). An N6-glutaryllysine; alternate modification is found at Lys126.

This sequence belongs to the histone H2A family. In terms of assembly, the nucleosome is a histone octamer containing two molecules each of H2A, H2B, H3 and H4 assembled in one H3-H4 heterotetramer and two H2A-H2B heterodimers. The octamer wraps approximately 147 bp of DNA. Deiminated on Arg-4 in granulocytes upon calcium entry. In terms of processing, monoubiquitination of Lys-120 (H2AK119Ub) by RING1, TRIM37 and RNF2/RING2 complex gives a specific tag for epigenetic transcriptional repression and participates in X chromosome inactivation of female mammals. It is involved in the initiation of both imprinted and random X inactivation. Ubiquitinated H2A is enriched in inactive X chromosome chromatin. Ubiquitination of H2A functions downstream of methylation of 'Lys-27' of histone H3 (H3K27me). H2AK119Ub by RNF2/RING2 can also be induced by ultraviolet and may be involved in DNA repair. Monoubiquitination of Lys-120 (H2AK119Ub) by TRIM37 may promote transformation of cells in a number of breast cancers. Following DNA double-strand breaks (DSBs), it is ubiquitinated through 'Lys-63' linkage of ubiquitin moieties by the E2 ligase UBE2N and the E3 ligases RNF8 and RNF168, leading to the recruitment of repair proteins to sites of DNA damage. Ubiquitination at Lys-14 and Lys-16 (H2AK13Ub and H2AK15Ub, respectively) in response to DNA damage is initiated by RNF168 that mediates monoubiquitination at these 2 sites, and 'Lys-63'-linked ubiquitin are then conjugated to monoubiquitin; RNF8 is able to extend 'Lys-63'-linked ubiquitin chains in vitro. Deubiquitinated by USP51 at Lys-14 and Lys-16 (H2AK13Ub and H2AK15Ub, respectively) after damaged DNA is repaired. H2AK119Ub and ionizing radiation-induced 'Lys-63'-linked ubiquitination (H2AK13Ub and H2AK15Ub) are distinct events. Post-translationally, phosphorylation on Ser-2 (H2AS1ph) is enhanced during mitosis. Phosphorylation on Ser-2 by RPS6KA5/MSK1 directly represses transcription. Acetylation of H3 inhibits Ser-2 phosphorylation by RPS6KA5/MSK1. Phosphorylation at Thr-121 (H2AT120ph) by DCAF1 is present in the regulatory region of many tumor suppresor genes and down-regulates their transcription. Glutamine methylation at Gln-105 (H2AQ104me) by FBL is specifically dedicated to polymerase I. It is present at 35S ribosomal DNA locus and impairs binding of the FACT complex. In terms of processing, symmetric dimethylation on Arg-4 by the PRDM1/PRMT5 complex may play a crucial role in the germ-cell lineage. Post-translationally, crotonylation (Kcr) is specifically present in male germ cells and marks testis-specific genes in post-meiotic cells, including X-linked genes that escape sex chromosome inactivation in haploid cells. Crotonylation marks active promoters and enhancers and confers resistance to transcriptional repressors. It is also associated with post-meiotically activated genes on autosomes. Lactylated in macrophages by EP300/P300 by using lactoyl-CoA directly derived from endogenous or exogenous lactate, leading to stimulates gene transcription.

Its subcellular location is the nucleus. It localises to the chromosome. Functionally, core component of nucleosome. Nucleosomes wrap and compact DNA into chromatin, limiting DNA accessibility to the cellular machineries which require DNA as a template. Histones thereby play a central role in transcription regulation, DNA repair, DNA replication and chromosomal stability. DNA accessibility is regulated via a complex set of post-translational modifications of histones, also called histone code, and nucleosome remodeling. The chain is Histone H2A type 1-H from Homo sapiens (Human).